An 819-amino-acid chain; its full sequence is Advillin (819 aa).

The tract at residues 1–731 (MSLSSAFRTV…YEQLKNELGD (731 aa)) is core. The Gelsolin-like 1 repeat unit spans residues 24-105 (MELVLVPLSA…VQYHESDTFR (82 aa)). Y85 is modified (phosphotyrosine). A 1,2-diacyl-sn-glycero-3-phospho-(1D-myo-inositol-4,5-bisphosphate) is bound by residues 109-116 (KRGIIYKK) and 135-143 (RLLHVKGKR). Gelsolin-like repeat units follow at residues 144–215 (NIRA…KEAA), 265–339 (TEVA…SAMF), 407–486 (LVPV…RHFM), 524–592 (NTKA…PEFW), and 631–704 (TEVT…PPTF). The segment at 628-819 (FLVTEVTDFT…LQLKKEAGLF (192 aa)) is required for interaction with F-actin. The tract at residues 731-819 (DATAIVRITT…LQLKKEAGLF (89 aa)) is headpiece. Positions 753 to 819 (ESGPKYYPVE…LQLKKEAGLF (67 aa)) constitute an HP domain. Y758 is subject to Phosphotyrosine.

The protein belongs to the villin/gelsolin family. As to quaternary structure, associates (via C-terminus) with actin. Interacts with F-actin. Interacts with SCARF1; the interaction occurs in embryonic dorsal root ganglions at 18 dpc and induces neurite-like outgrowth. Interacts with PLCE1. Interacts with ACTR2 and ACTR3; associates with the ARP2/3 complex. As to expression, expressed in dorsal root ganglion (DRG) neurons and superior cervical ganglia (SCG). Expressed in podocytes.

The protein resides in the cytoplasm. It localises to the cytoskeleton. Its subcellular location is the cell projection. The protein localises to the neuron projection. It is found in the axon. The protein resides in the lamellipodium. It localises to the cell junction. Its subcellular location is the focal adhesion. Functionally, ca(2+)-regulated actin-binding protein which plays an important role in actin bundling. May have a unique function in the morphogenesis of neuronal cells which form ganglia. Required for SREC1-mediated regulation of neurite-like outgrowth. Plays a role in regenerative sensory axon outgrowth and remodeling processes after peripheral injury in neonates. Involved in the formation of long fine actin-containing filopodia-like structures in fibroblast. Plays a role in ciliogenesis. In podocytes, controls lamellipodia formation through the regulation of EGF-induced diacylglycerol generation by PLCE1 and ARP2/3 complex assembly. This chain is Advillin, found in Rattus norvegicus (Rat).